Consider the following 213-residue polypeptide: Protein DMP3 (213 aa).

The interval 1–27 is disordered; that stretch reads MSSPSSLTQRNPTSSQEQSESVPQLRR. 4 helical membrane-spanning segments follow: residues 45-65, 74-94, 136-156, and 176-196; these read LANL…PVFT, TQVL…LSSF, IRII…AVAL, and VLDI…LVFP.

This sequence belongs to the plant DMP1 protein family. As to expression, expressed in leaves, siliques and roots (e.g. root hairs).

The protein localises to the endoplasmic reticulum membrane. Involved in membrane remodeling. The chain is Protein DMP3 from Arabidopsis thaliana (Mouse-ear cress).